Here is a 740-residue protein sequence, read N- to C-terminus: D-ornithine 4,5-aminomutase subunit beta (740 aa).

Substrate contacts are provided by residues E81, Y160, H182, and 294–296; that span reads RAQ. One can recognise a B12-binding domain in the interval 602 to 739; sequence PLKIVAATVG…VKKRREMREG (138 aa). Adenosylcob(III)alamin contacts are provided by residues 614-616 and H615; that span reads EHS. An N6-(pyridoxal phosphate)lysine modification is found at K626. Residues 664 to 669, T700, and S720 each bind adenosylcob(III)alamin; that span reads STIISH.

In terms of assembly, heterotetramer of 2 alpha (OraS) and 2 beta (OraE) subunits. Requires adenosylcob(III)alamin as cofactor. Pyridoxal 5'-phosphate is required as a cofactor.

It catalyses the reaction D-ornithine = (2R,4S)-2,4-diaminopentanoate. With respect to regulation, increased activity in the presence of dithiothreitol (DTT) in vitro. Inhibited by 1 mM potassium phosphate and potassium chloride. Inhibited by L-alpha-ornithine, D,L-alpha-lysine, L-beta-lysine (50%-60%), L-alpha-lysine (26%) and by delta-amino-n-valeric acid to a lesser extent. Significant decrease in activity is observed in the presence of 0.2 mM p-chloromercuribenzoate, N-ethylmaleimide and also by 2 mM iodoacetate to a lesser extent but not inhibited by arsenite. In terms of biological role, component of a complex that catalyzes the reversible migration of the omega amino group of D-ornithine to C-4 to form (2R,4S)-2,4-diaminopentanoic acid. OraE may be the catalytic subunit. Active only on D-ornithine and 2,4-diaminopentanoic acid but not active on L-ornithine, L-beta-lysine, L-alpha-lysine or D-alpha-lysine. The protein is D-ornithine 4,5-aminomutase subunit beta (oraE) of Acetoanaerobium sticklandii (strain ATCC 12662 / DSM 519 / JCM 1433 / CCUG 9281 / NCIMB 10654 / HF) (Clostridium sticklandii).